Consider the following 81-residue polypeptide: MGKINLMLRQIVCLPIKMYQYFISPLITPCCRYYPSCSEYADSAIKHYGVIKGLLMALNRLSRCHPWSKGGYDPLFPNDKN.

Belongs to the UPF0161 family.

The protein resides in the cell inner membrane. Its function is as follows. Could be involved in insertion of integral membrane proteins into the membrane. The protein is Putative membrane protein insertion efficiency factor of Legionella pneumophila (strain Lens).